A 2279-amino-acid polypeptide reads, in one-letter code: Zinc finger protein 318 (2279 aa).

Composition is skewed to low complexity over residues 1–12 (MYRSSARSSVSS) and 25–39 (SGRS…ARRS). 2 disordered regions span residues 1 to 140 (MYRS…PGLC) and 164 to 189 (RRRL…LTDD). An interaction with AR region spans residues 1-1092 (MYRSSARSSV…THMHNKKHTQ (1092 aa)). Ser40 carries the post-translational modification Phosphoserine. The segment covering 53 to 67 (PARRPRSPSGHRGRR) has biased composition (basic residues). Residues Ser79 and Ser81 each carry the phosphoserine modification. The segment covering 110-132 (SRGESRADYARDGRGDHPGDSGS) has biased composition (basic and acidic residues). Residues Ser136 and Ser173 each carry the phosphoserine modification. Positions 177–188 (NLEDMDRDDLTD) are enriched in acidic residues. Position 205 is a phosphotyrosine (Tyr205). Residues Ser207 and Ser214 each carry the phosphoserine modification. Disordered stretches follow at residues 279-346 (TVKI…DGGG) and 397-416 (LESF…YSGH). Over residues 311–333 (LDPEFRELDLARRKREEEEERSR) the composition is skewed to basic and acidic residues. Residues 315-343 (FRELDLARRKREEEEERSRSLSQELVGVD) adopt a coiled-coil conformation. A phosphoserine mark is found at Ser464, Ser472, Ser501, and Ser527. Disordered regions lie at residues 514-533 (LADS…DIED) and 540-570 (GDEE…ASSL). Residues Lys547, Lys553, Lys566, and Lys578 each participate in a glycyl lysine isopeptide (Lys-Gly) (interchain with G-Cter in SUMO2) cross-link. Positions 664–683 (FSADRRSSDPHRLESREAHH) are enriched in basic and acidic residues. The segment at 664 to 709 (FSADRRSSDPHRLESREAHHSNTHSPEVSHPHPPSPVDPYLLTKNS) is disordered. The residue at position 842 (Thr842) is a Phosphothreonine. Residues 876-980 (EKISDEKNRA…SELDKVAQIL (105 aa)) are a coiled coil. Composition is skewed to basic and acidic residues over residues 922 to 941 (QQGE…KDPL) and 989 to 1012 (QKSL…KSPE). 2 disordered regions span residues 922–942 (QQGE…DPLL) and 989–1051 (QKSL…TKQL). At Ser1010 the chain carries Phosphoserine. Low complexity predominate over residues 1013–1023 (KVSSFSNSSSN). Positions 1024–1034 (KESKVNNEKFR) are enriched in basic and acidic residues. Residue Ser1037 is modified to Phosphoserine. Matrin-type zinc fingers lie at residues 1063–1097 (AGNH…LDPY) and 1136–1166 (FYCQ…KYKK). Basic and acidic residues-rich tracts occupy residues 1195-1235 (RRQS…KLED), 1242-1251 (NSPEKAENKR), 1258-1267 (QLKEEVKKES), 1279-1288 (KKPEKEEEKS), and 1296-1316 (SKEE…EAGK). The tract at residues 1195–1319 (RRQSELKRKL…GKTEAGKAKP (125 aa)) is disordered. Phosphoserine occurs at positions 1243 and 1267. Ser1420 bears the Phosphoserine mark. Disordered stretches follow at residues 1428-1463 (AEKS…HPAA), 1577-1628 (GKGA…EELH), 1702-1735 (SSFQ…PPQL), and 1753-1775 (ESVN…ESEI). The span at 1440-1462 (ILPPPPPPPPPPPPPPPVIPHPA) shows a compositional bias: pro residues. The span at 1602–1623 (SNLSRTKSSDTSSTSPLNSSAS) shows a compositional bias: low complexity. Positions 1708-1719 (TSRDISPEKSEL) are enriched in basic and acidic residues. At Ser1713 the chain carries Phosphoserine. The span at 1724–1734 (PGPPGVEPPPQ) shows a compositional bias: pro residues. The stretch at 1768–1792 (EDCRESEIETNTELKERVKELSEGI) forms a coiled coil. Ser1856, Ser1896, Ser1971, Ser2030, Ser2035, Ser2091, Ser2101, Ser2189, Ser2192, and Ser2243 each carry phosphoserine. Positions 2252-2279 (DNMVPQGMPEQETTVGAIQDHTESSVHN) are disordered.

As to quaternary structure, homodimer. Heterodimer of isoform 1 and isoform 2. Isoform 1 and isoform 2 interact with AR. In terms of tissue distribution, expressed in endocrine tissue.

The protein localises to the nucleus. Functionally, acts as a transcriptional corepressor for AR-mediated transactivation function. May act as a transcriptional regulator during spermatogenesis and, in particular, during meiotic division. In terms of biological role, acts as a transcriptional coactivator for AR-mediated transactivation function. May act as a transcriptional regulator during spermatogenesis and, in particular, during meiotic division. The chain is Zinc finger protein 318 (ZNF318) from Homo sapiens (Human).